The chain runs to 281 residues: Orotidine 5'-phosphate decarboxylase (281 aa).

Lys-94 functions as the Proton donor in the catalytic mechanism.

This sequence belongs to the OMP decarboxylase family. Type 2 subfamily.

It catalyses the reaction orotidine 5'-phosphate + H(+) = UMP + CO2. Its pathway is pyrimidine metabolism; UMP biosynthesis via de novo pathway; UMP from orotate: step 2/2. In Thermomicrobium roseum (strain ATCC 27502 / DSM 5159 / P-2), this protein is Orotidine 5'-phosphate decarboxylase.